A 96-amino-acid chain; its full sequence is Putative membrane protein insertion efficiency factor (96 aa).

Residues 68 to 96 (DPVPEHFPARHPRPQGSPPTDHPPTDQPS) form a disordered region. Over residues 82–96 (QGSPPTDHPPTDQPS) the composition is skewed to pro residues.

The protein belongs to the UPF0161 family.

The protein resides in the cell membrane. Its function is as follows. Could be involved in insertion of integral membrane proteins into the membrane. This is Putative membrane protein insertion efficiency factor from Deinococcus radiodurans (strain ATCC 13939 / DSM 20539 / JCM 16871 / CCUG 27074 / LMG 4051 / NBRC 15346 / NCIMB 9279 / VKM B-1422 / R1).